Consider the following 618-residue polypeptide: MDRVSNLPEEVRCHILSFLPTKHAALTSVLSKSWLNLWKFETNLDIDDSDFLHPEEGKAERDEIRQSFVEFVDGVLALQGDSPIEKFSLKCITGIHPDHVNRWICNVLQRGVSDLYLFTDFSDEDTEEDGGYRLPQEMFVSRTLVKLKLRSEHCVNWWHWDIGASLPNLKSLNIDSDLIFFGEMEKFLSSFPVLEEVHMANMEWRELDETMSSASLTKLSIHGTGVEEFEHPKSISIDTPNLLYLNYSDLVAEDYPLDDEGDVVLQFCNVVKLINGIQNIQTLYLTEDTLEVLTMCCESMPVFNNLKTLGLKSDEGRGWQAVPALLRNCPHLEFLIIEGLLHSVTDKCGDACDCISREDKGRSLISCPVKKLEVRGFRGTIREKEMIRHFLEYFPCLDEMEIDAEENDSTNFEVPRILKVVAYRLHDVVSTEIVGHWQSSAQSGGWSQTQMDEMYYELAPRNKERIYDMFFFMRRASSTVPPPPPQEMSQDYLQMQLEVADLKERQRDQEAKLADLKERLRAMLDMIVDQNPIIASALRAREATNSEREKASSGQEMTEKERDYDALFDIIVEQNPMLASAVRALRATDSERAETSSNQEMTELGQATATYFPPREGE.

Residues 1 to 47 (MDRVSNLPEEVRCHILSFLPTKHAALTSVLSKSWLNLWKFETNLDID) enclose the F-box domain. LRR repeat units lie at residues 147–176 (LKLRSEHCVNWWHWDIGASLPNLKSLNIDS), 196–223 (EVHMANMEWRELDETMSSASLTKLSIHG), 224–249 (TGVEEFEHPKSISIDTPNLLYLNYSD), 282–313 (TLYLTEDTLEVLTMCCESMPVFNNLKTLGLKS), 314–339 (DEGRGWQAVPALLRNCPHLEFLIIEG), and 354–379 (CISREDKGRSLISCPVKKLEVRGFRG). The tract at residues 587–618 (ATDSERAETSSNQEMTELGQATATYFPPREGE) is disordered. A compositionally biased stretch (polar residues) spans 595-609 (TSSNQEMTELGQATA).

The sequence is that of F-box/LRR-repeat protein At3g58940 from Arabidopsis thaliana (Mouse-ear cress).